We begin with the raw amino-acid sequence, 420 residues long: Dynein axonemal assembly factor 4 (420 aa).

Residues 3 to 87 enclose the CS domain; it reads VRVSEFSWQQ…KEPVLWESLS (85 aa). The segment at 7-103 is mediates interaction with ESR1 and STUB1; sequence EFSWQQTPAA…EMMQRIREKS (97 aa). Residues 165–192 show a composition bias toward basic and acidic residues; it reads CQKKADGQKRVQRKEKPLQGKQAEERGA. Residues 165-212 are disordered; that stretch reads CQKKADGQKRVQRKEKPLQGKQAEERGALKPQSLPRKAPPTRLPTRGR. TPR repeat units follow at residues 288–321, 323–355, and 364–397; these read PDWL…NRKI, VLYL…LTPP, and MKAH…DPAN.

As to quaternary structure, interacts with ZMYND10. Interacts with STUB1. Interacts with ESR1 and ESR2. Interacts with DNAAF2. Interacts with CCT3, CCT4, CCT5 and CCT8. Interacts with DNAAF6/PIH1D3.

Its subcellular location is the nucleus. The protein resides in the cytoplasm. It is found in the cell projection. It localises to the neuron projection. The protein localises to the dynein axonemal particle. Involved in neuronal migration during development of the cerebral neocortex. May regulate the stability and proteasomal degradation of the estrogen receptors that play an important role in neuronal differentiation, survival and plasticity. Axonemal dynein assembly factor required for ciliary motility. The sequence is that of Dynein axonemal assembly factor 4 from Rattus norvegicus (Rat).